The sequence spans 739 residues: Phosphoribosylformylglycinamidine synthase subunit PurL (739 aa).

Residue His-54 is part of the active site. Residues Tyr-57 and Lys-96 each coordinate ATP. Residue Glu-98 coordinates Mg(2+). Substrate-binding positions include 99-102 (SHNH) and Arg-121. Residue His-100 is the Proton acceptor of the active site. A Mg(2+)-binding site is contributed by Asp-122. Gln-245 contributes to the substrate binding site. Asp-273 serves as a coordination point for Mg(2+). 317–319 (ESQ) lines the substrate pocket. ATP-binding residues include Asp-500 and Gly-537. Position 538 (Asn-538) interacts with Mg(2+). Ser-540 serves as a coordination point for substrate.

It belongs to the FGAMS family. As to quaternary structure, monomer. Part of the FGAM synthase complex composed of 1 PurL, 1 PurQ and 2 PurS subunits.

Its subcellular location is the cytoplasm. It carries out the reaction N(2)-formyl-N(1)-(5-phospho-beta-D-ribosyl)glycinamide + L-glutamine + ATP + H2O = 2-formamido-N(1)-(5-O-phospho-beta-D-ribosyl)acetamidine + L-glutamate + ADP + phosphate + H(+). It participates in purine metabolism; IMP biosynthesis via de novo pathway; 5-amino-1-(5-phospho-D-ribosyl)imidazole from N(2)-formyl-N(1)-(5-phospho-D-ribosyl)glycinamide: step 1/2. Part of the phosphoribosylformylglycinamidine synthase complex involved in the purines biosynthetic pathway. Catalyzes the ATP-dependent conversion of formylglycinamide ribonucleotide (FGAR) and glutamine to yield formylglycinamidine ribonucleotide (FGAM) and glutamate. The FGAM synthase complex is composed of three subunits. PurQ produces an ammonia molecule by converting glutamine to glutamate. PurL transfers the ammonia molecule to FGAR to form FGAM in an ATP-dependent manner. PurS interacts with PurQ and PurL and is thought to assist in the transfer of the ammonia molecule from PurQ to PurL. In Bacillus cereus (strain AH187), this protein is Phosphoribosylformylglycinamidine synthase subunit PurL.